Reading from the N-terminus, the 86-residue chain is Small ribosomal subunit protein bS20 (86 aa).

Belongs to the bacterial ribosomal protein bS20 family.

Functionally, binds directly to 16S ribosomal RNA. This Arthrobacter sp. (strain FB24) protein is Small ribosomal subunit protein bS20.